Here is a 799-residue protein sequence, read N- to C-terminus: Oxygen sensor protein DosP (799 aa).

One can recognise a PAS 1 domain in the interval 10-81 (ADGIFFPALE…YIRHNREGGK (72 aa)). Residues His69 and Met87 each coordinate heme. The PAS 2 domain occupies 134 to 207 (QTRQLIIAVD…LQQLLWKTAR (74 aa)). The region spanning 208–260 (DQDEFLLLTRTGEKIWIKASISPVYDVLAHLQNLVMTFSDITEERQIRQLEGN) is the PAC domain. Residues 402–532 (VSPVVYLIGV…GGNGWQFFSP (131 aa)) enclose the GGDEF domain. Positions 541 to 795 (RLVLGAALKE…EIPGWMSSVL (255 aa)) constitute an EAL domain.

Homodimer; has been previously suggested to be a homotetramer based on size exclusion chromatography. Forms a complex with DosC. Requires heme as cofactor. Mg(2+) serves as cofactor. In terms of processing, the heme distal ligand is coordinated by Met-87 in the active Fe(2+) (ferrous) form, by O(2) in the O(2)-bound form and by H(2)O in the inactive Fe(3+) (ferric) form.

The catalysed reaction is 3',3'-c-di-GMP + H2O = 5'-phosphoguanylyl(3'-&gt;5')guanosine + H(+). With respect to regulation, has c-di-GMP PDE activity in both Fe(2+) and Fe(3+)-bound forms; this activity is increased 6-7 fold by binding of O(2) and CO and NO. Has cAMP PDE activity only when the heme is in the Fe(2+) form. cAMP PDE activity is inhibited by oxidation of the heme iron and by binding of external ligands such as CO and NO. Also strongly inhibited by etazolate hydrochloride, a selective cAMP PDE inhibitor. PDE activity is inhibited in the absence of oxygen. Functionally, heme-based oxygen sensor protein displaying phosphodiesterase (PDE) activity toward c-di-GMP in response to oxygen availability. Involved in the modulation of intracellular c-di-GMP levels, in association with DosC which catalyzes the biosynthesis of c-di-GMP (diguanylate cyclase activity). Cyclic-di-GMP is a second messenger which controls cell surface-associated traits in bacteria. Has very poor PDE activity on cAMP but is not active with cGMP, bis(p-nitrophenyl) phosphate or p-nitrophenyl phosphate. Via its PDE activity on c-di-GMP, DosP regulates biofilm formation through the repression of transcription of the csgBAC operon, which encodes curli structural subunits. This chain is Oxygen sensor protein DosP (dosP), found in Escherichia coli (strain K12).